The primary structure comprises 455 residues: MSKAHVVGLGKSGVAAARLLKREGWEVVLSDRNTSDTLLKQQQELAKEQITVELGYSLDFAGALPDLIVVSPGVPWDIPALVKARELGIETIGEMELAWRHLKSLPWVGITGTNGKTTTTALIAAIFQAAGFDAPACGNIGYAACEVALAATPPDWIIGEMSSYQIESSLTLAPHISIWTTFTPDHLARHKTLENYYDIKAKLLRQSHLQVFNGDDAYLSKIGASHWPDAYWTSVKGKDYLIGDKGFYIEDGWVVEQLQPNSSPQRIVAAEALRMVGAHNLQNLLMAVAAARLADIPPNAIDKAVREFPGVAHRLEHICTWQGIDFINDSKATNYDAAEVGLASVKSPVILIAGGEAKPGDDAAWLAKIQGQTSAVLLIGNAAPAFAQRLQEIGYSNYEIVETMEQAVRRSLDLAKHHQAPVVLLSPACASFDQYPNFEARGDHFRQLCLELVGS.

112–118 (GTNGKTT) contributes to the ATP binding site.

This sequence belongs to the MurCDEF family.

The protein localises to the cytoplasm. It carries out the reaction UDP-N-acetyl-alpha-D-muramoyl-L-alanine + D-glutamate + ATP = UDP-N-acetyl-alpha-D-muramoyl-L-alanyl-D-glutamate + ADP + phosphate + H(+). The protein operates within cell wall biogenesis; peptidoglycan biosynthesis. In terms of biological role, cell wall formation. Catalyzes the addition of glutamate to the nucleotide precursor UDP-N-acetylmuramoyl-L-alanine (UMA). This is UDP-N-acetylmuramoylalanine--D-glutamate ligase from Trichormus variabilis (strain ATCC 29413 / PCC 7937) (Anabaena variabilis).